A 518-amino-acid chain; its full sequence is Dihydro-ML-236C monooxygenase mlcC (518 aa).

At 1-31 the chain is on the cytoplasmic side; sequence MLGQVLLTVESYQWVSTPQALVAVAVLLSLI. The chain crosses the membrane as a helical; Signal-anchor for type II membrane protein span at residues 32–48; it reads AYRLRGRQSELQVYNPK. Residues 49–518 are Lumenal-facing; that stretch reads KWWELTTMRA…EDIPLPHDRC (470 aa). Position 454 (Cys-454) interacts with heme.

It belongs to the cytochrome P450 family. Heme is required as a cofactor.

The protein localises to the endoplasmic reticulum membrane. The enzyme catalyses dihydro-ML-236C carboxylate + reduced [NADPH--hemoprotein reductase] + O2 = ML-236C carboxylate + oxidized [NADPH--hemoprotein reductase] + 2 H2O + H(+). The catalysed reaction is ML-236C carboxylate + reduced [NADPH--hemoprotein reductase] + O2 = ML-236A carboxylate + oxidized [NADPH--hemoprotein reductase] + H2O + H(+). It participates in polyketide biosynthesis. In terms of biological role, dihydro-ML-236C carboxylate monooxygenase; part of the gene cluster that mediates the biosynthesis of compactin, also known as mevastatin or ML-236B, and which acts as a potent competitive inhibitor of HMG-CoA reductase. Compactin biosynthesis is performed in two stages. The first stage is catalyzed by the nonaketide synthase mlcA, which belongs to type I polyketide synthases and catalyzes the iterative nine-step formation of the polyketide. This PKS stage is completed by the action of dehydrogenase mlcG, which catalyzes the NADPH-dependent reduction of the unsaturated tetra-, penta- and heptaketide intermediates that arise during the mlcA-mediated biosynthesis of the nonaketide chain and leads to dihydro-ML-236C carboxylate. Covalently bound dihydro-ML-236C carboxylate is released from mlcA by the mlcF esterase. Conversion of dihydro-ML-236C carboxylate into ML-236A carboxylate is subsequently performed with the participation of molecular oxygen and P450 monoogygenase mlcC. Finally, mlcH performs the conversion of ML-236A carboxylate to ML-236B/compactin carboxylate through the addition of the side-chain diketide moiety produced by the diketide synthase mlcB. In Penicillium citrinum, this protein is Dihydro-ML-236C monooxygenase mlcC.